We begin with the raw amino-acid sequence, 570 residues long: Urease subunit alpha (570 aa).

Residues 131-570 (GGFDAHIHFI…LPMAQRYFLF (440 aa)) form the Urease domain. The Ni(2+) site is built by His-136, His-138, and Lys-219. Residue Lys-219 is modified to N6-carboxylysine. His-221 is a binding site for substrate. Residues His-248 and His-274 each contribute to the Ni(2+) site. The Proton donor role is filled by His-322. Asp-362 is a Ni(2+) binding site.

This sequence belongs to the metallo-dependent hydrolases superfamily. Urease alpha subunit family. Heterotrimer of UreA (gamma), UreB (beta) and UreC (alpha) subunits. Three heterotrimers associate to form the active enzyme. Ni cation serves as cofactor. Post-translationally, carboxylation allows a single lysine to coordinate two nickel ions.

Its subcellular location is the cytoplasm. The catalysed reaction is urea + 2 H2O + H(+) = hydrogencarbonate + 2 NH4(+). It functions in the pathway nitrogen metabolism; urea degradation; CO(2) and NH(3) from urea (urease route): step 1/1. In Mesorhizobium japonicum (strain LMG 29417 / CECT 9101 / MAFF 303099) (Mesorhizobium loti (strain MAFF 303099)), this protein is Urease subunit alpha.